A 344-amino-acid polypeptide reads, in one-letter code: N-acetyl-gamma-glutamyl-phosphate reductase (344 aa).

Residue C150 is part of the active site.

It belongs to the NAGSA dehydrogenase family. Type 1 subfamily.

The protein resides in the cytoplasm. The catalysed reaction is N-acetyl-L-glutamate 5-semialdehyde + phosphate + NADP(+) = N-acetyl-L-glutamyl 5-phosphate + NADPH + H(+). Its pathway is amino-acid biosynthesis; L-arginine biosynthesis; N(2)-acetyl-L-ornithine from L-glutamate: step 3/4. Its function is as follows. Catalyzes the NADPH-dependent reduction of N-acetyl-5-glutamyl phosphate to yield N-acetyl-L-glutamate 5-semialdehyde. In Pseudomonas putida (strain ATCC 700007 / DSM 6899 / JCM 31910 / BCRC 17059 / LMG 24140 / F1), this protein is N-acetyl-gamma-glutamyl-phosphate reductase.